The following is a 385-amino-acid chain: 26S proteasome non-ATPase regulatory subunit 13 (385 aa).

Residues 176–347 (EFYKNALMYL…EIIHITWVTP (172 aa)) form the PCI domain.

This sequence belongs to the proteasome subunit S11 family.

In terms of biological role, acts as a regulatory subunit of the 26S proteasome which is involved in the ATP-dependent degradation of ubiquitinated proteins. The polypeptide is 26S proteasome non-ATPase regulatory subunit 13 (psmD13) (Dictyostelium discoideum (Social amoeba)).